Reading from the N-terminus, the 358-residue chain is Putative pyruvyl transferase EpsI (358 aa).

This sequence belongs to the polysaccharide pyruvyl transferase family.

May be involved in the production of the exopolysaccharide (EPS) component of the extracellular matrix during biofilm formation. EPS is responsible for the adhesion of chains of cells into bundles. This is Putative pyruvyl transferase EpsI (epsI) from Bacillus subtilis (strain 168).